The primary structure comprises 468 residues: Mitochondrial distribution and morphology protein 10 (468 aa).

The span at 370–386 shows a compositional bias: basic and acidic residues; the sequence is ERDGLPGIQRDDHDMHH. Positions 370 to 394 are disordered; it reads ERDGLPGIQRDDHDMHHHPQRPHAS.

The protein belongs to the MDM10 family. As to quaternary structure, component of the ER-mitochondria encounter structure (ERMES) or MDM complex, composed of MMM1, MDM10, MDM12 and MDM34. Associates with the mitochondrial outer membrane sorting assembly machinery SAM(core) complex.

Its subcellular location is the mitochondrion outer membrane. In terms of biological role, component of the ERMES/MDM complex, which serves as a molecular tether to connect the endoplasmic reticulum and mitochondria. Components of this complex are involved in the control of mitochondrial shape and protein biogenesis and may function in phospholipid exchange. MDM10 is involved in the late assembly steps of the general translocase of the mitochondrial outer membrane (TOM complex). Functions in the TOM40-specific route of the assembly of outer membrane beta-barrel proteins, including the association of TOM40 with the receptor TOM22 and small TOM proteins. Can associate with the SAM(core) complex as well as the MDM12-MMM1 complex, both involved in late steps of the major beta-barrel assembly pathway, that is responsible for biogenesis of all outer membrane beta-barrel proteins. May act as a switch that shuttles between both complexes and channels precursor proteins into the TOM40-specific pathway. Plays a role in mitochondrial morphology and in the inheritance of mitochondria. This is Mitochondrial distribution and morphology protein 10 from Ajellomyces dermatitidis (strain ER-3 / ATCC MYA-2586) (Blastomyces dermatitidis).